The following is a 593-amino-acid chain: DNA topoisomerase I, mitochondrial (593 aa).

The N-terminal 43 residues, 1-43 (MLLLWLRALCRRFQHVPRRVPSRQVSRGSKASRAGWGETSKSS), are a transit peptide targeting the mitochondrion. 3 interaction with DNA regions span residues 254 to 255 (KY), 317 to 322 (RTGNEK), and 414 to 416 (TAK). Residues 261–593 (SSKPKGEMDW…FNQAGEDFEF (333 aa)) form the Topo IB-type catalytic domain. Tyr-551 functions as the O-(3'-phospho-DNA)-tyrosine intermediate in the catalytic mechanism.

It belongs to the type IB topoisomerase family. Requires Ca(2+) as cofactor. The cofactor is Mg(2+).

Its subcellular location is the mitochondrion. The enzyme catalyses ATP-independent breakage of single-stranded DNA, followed by passage and rejoining.. Releases the supercoiling and torsional tension of DNA introduced during duplication of mitochondrial DNA by transiently cleaving and rejoining one strand of the DNA duplex. Introduces a single-strand break via transesterification at a target site in duplex DNA. The scissile phosphodiester is attacked by the catalytic tyrosine of the enzyme, resulting in the formation of a DNA-(3'-phosphotyrosyl)-enzyme intermediate and the expulsion of a 5'-OH DNA strand. The free DNA strand then rotates around the intact phosphodiester bond on the opposing strand, thus removing DNA supercoils. Finally, in the religation step, the DNA 5'-OH attacks the covalent intermediate to expel the active-site tyrosine and restore the DNA phosphodiester backbone. This is DNA topoisomerase I, mitochondrial (Top1mt) from Rattus norvegicus (Rat).